A 199-amino-acid chain; its full sequence is 3-isopropylmalate dehydratase small subunit (199 aa).

This sequence belongs to the LeuD family. LeuD type 1 subfamily. In terms of assembly, heterodimer of LeuC and LeuD.

The catalysed reaction is (2R,3S)-3-isopropylmalate = (2S)-2-isopropylmalate. It functions in the pathway amino-acid biosynthesis; L-leucine biosynthesis; L-leucine from 3-methyl-2-oxobutanoate: step 2/4. Functionally, catalyzes the isomerization between 2-isopropylmalate and 3-isopropylmalate, via the formation of 2-isopropylmaleate. The protein is 3-isopropylmalate dehydratase small subunit of Kocuria rhizophila (strain ATCC 9341 / DSM 348 / NBRC 103217 / DC2201).